Consider the following 298-residue polypeptide: Probable alpha-L-glutamate ligase 2 (298 aa).

One can recognise an ATP-grasp domain in the interval 104–287; that stretch reads MQLLSRQGIG…VADAIICFME (184 aa). Residues K141, 178–179, D187, and 211–213 contribute to the ATP site; these read EY and RSN. 3 residues coordinate Mg(2+): D248, E260, and N262. Mn(2+) is bound by residues D248, E260, and N262.

It belongs to the RimK family. The cofactor is Mg(2+). Mn(2+) serves as cofactor.

The polypeptide is Probable alpha-L-glutamate ligase 2 (Shewanella frigidimarina (strain NCIMB 400)).